Consider the following 607-residue polypeptide: Guanine nucleotide-binding protein-like 1 (607 aa).

Basic residues predominate over residues 1–14; that stretch reads MPRKKPFSVKQKKK. The disordered stretch occupies residues 1 to 81; that stretch reads MPRKKPFSVK…GPRGYDPNRY (81 aa). Residues 15 to 26 show a composition bias toward basic and acidic residues; that stretch reads QLQDKRERKRGL. Phosphoserine is present on residues S32, S33, and S34. Phosphothreonine is present on residues T48 and T50. A phosphoserine mark is found at S51 and S68. Residues 178-418 enclose the CP-type G domain; the sequence is WRQLWRVLEM…LCDCPGLIFP (241 aa). 225–228 is a binding site for GTP; the sequence is NKVD. S324 is subject to Phosphoserine. Residues 367–374 and 411–415 contribute to the GTP site; these read GFPNVGKS and DCPGL. The segment at 547–607 is disordered; it reads GPAGDEEEEE…PYALLGEDEC (61 aa). Residues 550–584 are compositionally biased toward acidic residues; that stretch reads GDEEEEEEEELSSSCEEEGEEDRDADEEGEGDEDT. Residues S561, S562, and S563 each carry the phosphoserine modification.

It belongs to the TRAFAC class YlqF/YawG GTPase family.

Possible regulatory or functional link with the histocompatibility cluster. This chain is Guanine nucleotide-binding protein-like 1 (GNL1), found in Pongo abelii (Sumatran orangutan).